We begin with the raw amino-acid sequence, 1120 residues long: Hachiman protein HamB (1120 aa).

A Helicase ATP-binding domain is found at D278–R452. Residue M291–T298 coordinates ATP. The short motif at D395–H398 is the DEAH box element. The region spanning A521–Y710 is the Helicase C-terminal domain.

Belongs to the helicase family.

In terms of biological role, component of antiviral defense system Hachiman, composed of HamA and HamB. Expression of Hachiman in B.subtilis (strain BEST7003) confers resistance to phages phi105, phi29, phi3T, rho14, SBSphiJ, SpBeta and SPR. Probably a helicase. The chain is Hachiman protein HamB from Bacillus cereus.